The chain runs to 644 residues: Exoribonuclease 2 (644 aa).

In terms of domain architecture, RNB spans Arg-190–Ile-516. In terms of domain architecture, S1 motif spans Asp-562–Val-644.

Belongs to the RNR ribonuclease family. RNase II subfamily.

The protein localises to the cytoplasm. It carries out the reaction Exonucleolytic cleavage in the 3'- to 5'-direction to yield nucleoside 5'-phosphates.. In terms of biological role, involved in mRNA degradation. Hydrolyzes single-stranded polyribonucleotides processively in the 3' to 5' direction. The sequence is that of Exoribonuclease 2 from Sodalis glossinidius (strain morsitans).